A 314-amino-acid polypeptide reads, in one-letter code: Thymidylate synthase (314 aa).

Residues R32 and R176–R177 contribute to the dUMP site. The active-site Nucleophile is the C196. DUMP-binding positions include R216–D219, N227, and H257–Y259. D219 lines the (6R)-5,10-methylene-5,6,7,8-tetrahydrofolate pocket. (6R)-5,10-methylene-5,6,7,8-tetrahydrofolate is bound at residue A313.

Belongs to the thymidylate synthase family. Bacterial-type ThyA subfamily. In terms of assembly, homodimer.

The protein localises to the cytoplasm. The enzyme catalyses dUMP + (6R)-5,10-methylene-5,6,7,8-tetrahydrofolate = 7,8-dihydrofolate + dTMP. It participates in pyrimidine metabolism; dTTP biosynthesis. In terms of biological role, catalyzes the reductive methylation of 2'-deoxyuridine-5'-monophosphate (dUMP) to 2'-deoxythymidine-5'-monophosphate (dTMP) while utilizing 5,10-methylenetetrahydrofolate (mTHF) as the methyl donor and reductant in the reaction, yielding dihydrofolate (DHF) as a by-product. This enzymatic reaction provides an intracellular de novo source of dTMP, an essential precursor for DNA biosynthesis. This chain is Thymidylate synthase, found in Novosphingobium aromaticivorans (strain ATCC 700278 / DSM 12444 / CCUG 56034 / CIP 105152 / NBRC 16084 / F199).